Here is a 176-residue protein sequence, read N- to C-terminus: Ribosome rescue factor SmrB (176 aa).

Residues 29-51 are disordered; sequence TIIQQPKKNTKQKEIKRSNREAS. A compositionally biased stretch (basic and acidic residues) spans 39-51; that stretch reads KQKEIKRSNREAS. Positions 97–172 constitute a Smr domain; that stretch reads LDMHGMTQQE…GDGALLVLLS (76 aa).

Belongs to the SmrB family. In terms of assembly, associates with collided ribosomes, but not with correctly translating polysomes.

In terms of biological role, acts as a ribosome collision sensor. Detects stalled/collided disomes (pairs of ribosomes where the leading ribosome is stalled and a second ribosome has collided with it) and endonucleolytically cleaves mRNA at the 5' boundary of the stalled ribosome. Stalled/collided disomes form a new interface (primarily via the 30S subunits) that binds SmrB. Cleaved mRNA becomes available for tmRNA ligation, leading to ribosomal subunit dissociation and rescue of stalled ribosomes. This is Ribosome rescue factor SmrB from Vibrio parahaemolyticus serotype O3:K6 (strain RIMD 2210633).